Consider the following 614-residue polypeptide: Jacalin-related lectin 14 (614 aa).

4 consecutive Jacalin-type lectin domains span residues 27 to 169 (VQKM…YFSW), 172 to 314 (PRKM…YFTT), 317 to 462 (PTKS…YFSP), and 468 to 611 (AEKL…HVVP).

It belongs to the jacalin lectin family.

The protein is Jacalin-related lectin 14 (JAL14) of Arabidopsis thaliana (Mouse-ear cress).